Here is a 399-residue protein sequence, read N- to C-terminus: Protein DDI1 homolog 2 (399 aa).

One can recognise a Ubiquitin-like domain in the interval 1 to 81; that stretch reads MLLTVYCVRR…VILRQKENAD (81 aa). Residues 99–134 form a disordered region; sequence IAVPGTSNPQQRQLPRTQAQHSSPGEMASSPQGLDN. Over residues 103 to 131 the composition is skewed to polar residues; sequence GTSNPQQRQLPRTQAQHSSPGEMASSPQG. Thr-104 is subject to Phosphothreonine. Phosphoserine is present on residues Ser-121, Ser-128, Ser-150, and Ser-194. Asp-252 is an active-site residue. A Ubiquitin-binding motif is present at residues 376 to 395; that stretch reads EEIADQELAEAIQKSAEDAE.

It belongs to the DDI1 family. As to quaternary structure, homodimer.

It localises to the cytoplasm. Its subcellular location is the cytosol. The protein localises to the chromosome. In terms of biological role, aspartic protease that mediates the cleavage of NFE2L1/NRF1 at 'Leu-104', thereby promoting release of NFE2L1/NRF1 from the endoplasmic reticulum membrane. Ubiquitination of NFE2L1/NRF1 is a prerequisite for cleavage, suggesting that DDI2 specifically recognizes and binds ubiquitinated NFE2L1/NRF1. Seems to act as a proteasomal shuttle which links the proteasome and replication fork proteins like RTF2. Required, with DDI1, for cellular survival following replication stress. Together or redudantly with DDI1, removes RTF2 from stalled forks to allow cell cycle progression after replication stress and maintains genome integrity. This chain is Protein DDI1 homolog 2, found in Mus musculus (Mouse).